The sequence spans 213 residues: Adenylate kinase (213 aa).

ATP is bound at residue 10 to 15 (GAGKGT). The interval 30–59 (STGDMLRAAVAAGSEVGLRAKAAMESGSLV) is NMP. AMP contacts are provided by residues threonine 31, arginine 36, 57–59 (SLV), 85–88 (GFPR), and glutamine 92. The tract at residues 126 to 163 (GRSSCEKCGEGYHDSFKPSAQPNVCDKCSGTLKRRADD) is LID. Position 127 (arginine 127) interacts with ATP. Positions 130, 133, 150, and 153 each coordinate Zn(2+). 2 residues coordinate AMP: arginine 160 and arginine 171. An ATP-binding site is contributed by glutamine 199.

This sequence belongs to the adenylate kinase family. As to quaternary structure, monomer.

It localises to the cytoplasm. The enzyme catalyses AMP + ATP = 2 ADP. The protein operates within purine metabolism; AMP biosynthesis via salvage pathway; AMP from ADP: step 1/1. Its function is as follows. Catalyzes the reversible transfer of the terminal phosphate group between ATP and AMP. Plays an important role in cellular energy homeostasis and in adenine nucleotide metabolism. This chain is Adenylate kinase, found in Magnetococcus marinus (strain ATCC BAA-1437 / JCM 17883 / MC-1).